Consider the following 180-residue polypeptide: Cell division protein ZapC (180 aa).

This sequence belongs to the ZapC family. As to quaternary structure, interacts directly with FtsZ.

The protein localises to the cytoplasm. Contributes to the efficiency of the cell division process by stabilizing the polymeric form of the cell division protein FtsZ. Acts by promoting interactions between FtsZ protofilaments and suppressing the GTPase activity of FtsZ. In Vibrio vulnificus (strain CMCP6), this protein is Cell division protein ZapC.